The chain runs to 545 residues: Chaperonin GroEL (545 aa).

Residues 29 to 32 (TIGP), 86 to 90 (DGTTT), Gly413, 478 to 480 (NAA), and Asp494 each bind ATP.

Belongs to the chaperonin (HSP60) family. As to quaternary structure, forms a cylinder of 14 subunits composed of two heptameric rings stacked back-to-back. Interacts with the co-chaperonin GroES.

Its subcellular location is the cytoplasm. It catalyses the reaction ATP + H2O + a folded polypeptide = ADP + phosphate + an unfolded polypeptide.. Its function is as follows. Together with its co-chaperonin GroES, plays an essential role in assisting protein folding. The GroEL-GroES system forms a nano-cage that allows encapsulation of the non-native substrate proteins and provides a physical environment optimized to promote and accelerate protein folding. The polypeptide is Chaperonin GroEL (Exiguobacterium sibiricum (strain DSM 17290 / CCUG 55495 / CIP 109462 / JCM 13490 / 255-15)).